The following is a 20-amino-acid chain: Protein PR-L5 (20 aa).

It belongs to the BetVI family.

The polypeptide is Protein PR-L5 (Lupinus luteus (European yellow lupine)).